Reading from the N-terminus, the 207-residue chain is Inner membrane-spanning protein YciB (207 aa).

The next 6 membrane-spanning stretches (helical) occupy residues 3–23 (FLFDLLPIVLFFVAFKVAEGQ), 51–71 (VLLATLVVIVATFAQIGWLLL), 78–98 (TMLWVSLGLVTVLGGATVWFH), 105–125 (WKPSVLYWVMGTAFWLSHAVF), 150–170 (FMWIAFFAFMGLANLYVAYSF), and 178–198 (FKLFGGVGLMLLFTLAQGLYL).

Belongs to the YciB family.

The protein localises to the cell inner membrane. In terms of biological role, plays a role in cell envelope biogenesis, maintenance of cell envelope integrity and membrane homeostasis. The chain is Inner membrane-spanning protein YciB from Methylibium petroleiphilum (strain ATCC BAA-1232 / LMG 22953 / PM1).